A 1151-amino-acid polypeptide reads, in one-letter code: Zinc finger protein ZFPM2 (1151 aa).

A compositionally biased stretch (basic residues) spans 1-13 (MSRRKQSKPRQIK). The segment at 1-102 (MSRRKQSKPR…ETDDWDGPGE (102 aa)) is disordered. Acidic residues-rich tracts occupy residues 18–33 (DAIEDEEEECPSEETD) and 70–82 (EGIQETAESDGDT). The CCHC FOG-type 1 zinc finger occupies 244–277 (IVNKDIFPCKSCGIWYRSERNLQAHLMYYCSGRQ). Residues Cys-252, Cys-255, His-268, and Cys-273 each coordinate Zn(2+). Residues 296-320 (SLCPFPQCTKSFSNARALEMHLNSH) form a C2H2-type 1 zinc finger. Lys-324 participates in a covalent cross-link: Glycyl lysine isopeptide (Lys-Gly) (interchain with G-Cter in SUMO1). C2H2-type zinc fingers lie at residues 335 to 357 (LKCTVCSYTADSVINFHQHLFSH) and 363 to 385 (FRCNHCHFGFQTQRELLQHQELH). The segment at 389-487 (GKLPRESDME…RLASSPVQPN (99 aa)) is disordered. Composition is skewed to polar residues over residues 401–410 (PSATEDSLQP) and 419–431 (ELPQSQKAMQTKD). Residue Lys-444 forms a Glycyl lysine isopeptide (Lys-Gly) (interchain with G-Cter in SUMO2) linkage. Polar residues predominate over residues 447–485 (LFLTNQRPEIQPTTNKQSFSYTKIKSEPSSPRLASSPVQ). Lys-471 is covalently cross-linked (Glycyl lysine isopeptide (Lys-Gly) (interchain with G-Cter in SUMO1)). Position 532 is a phosphoserine (Ser-532). Residues 542 to 575 (PLMPKGATCFECNITFNNLDNYLVHKKHYCSSRW) form a CCHC FOG-type 2 zinc finger. Zn(2+) contacts are provided by Cys-550, Cys-553, His-566, and Cys-571. A Phosphoserine modification is found at Ser-581. The interval 636 to 683 (GPNGKGHDKDFSTQTKKLSTSSNNDDKINGKPVDVKNPSVPLVDGESD) is disordered. Positions 647–658 (STQTKKLSTSSN) are enriched in polar residues. A CCHC FOG-type 3 zinc finger spans residues 681–714 (ESDPNKTTCEACNITFSRHETYMVHKQYYCATRH). 4 residues coordinate Zn(2+): Cys-689, Cys-692, His-705, and Cys-710. A Nuclear localization signal motif is present at residues 736–740 (RKRRK). The segment at 829–835 (PIDLSKK) is interaction with CTBP2. The CCHC FOG-type 4 zinc-finger motif lies at 848–881 (KRLLDYHECTVCKISFNKVENYLAHKQNFCPVTA). Residues Cys-856, Cys-859, His-872, and Cys-877 each coordinate Zn(2+). The residue at position 904 (Ser-904) is a Phosphoserine. Glycyl lysine isopeptide (Lys-Gly) (interchain with G-Cter in SUMO1) cross-links involve residues Lys-915 and Lys-955. Residue Ser-1014 is modified to Phosphoserine. Positions 1051–1095 (DERPAANPQQENISQNPQHEDDHKSPSWISENPLAANENVSPGIP) are disordered. Positions 1057 to 1067 (NPQQENISQNP) are enriched in polar residues. The CCHC FOG-type 5 zinc-finger motif lies at 1113–1146 (QAPTSGKYCRLCDIQFNNLSNFITHKKFYCSSHA). Residues Cys-1121, Cys-1124, His-1137, and Cys-1142 each coordinate Zn(2+).

Belongs to the FOG (Friend of GATA) family. Interacts with the N-terminal zinc-finger of GATA4, GATA5 and probably GATA6. Interacts with retinoid nuclear receptor RXRA when ligand bound. Interacts with corepressor CTBP2; this interaction is however not essential for corepressor activity. Able to bind GATA1 in vitro. Interacts with NR2F2 and NR2F6. Interacts with ATOH8; mediates indirect interaction with GATA4. Sumoylation reduces transcriptional repression activity. Widely expressed at low level.

Its subcellular location is the nucleus. Its function is as follows. Transcription regulator that plays a central role in heart morphogenesis and development of coronary vessels from epicardium, by regulating genes that are essential during cardiogenesis. Essential cofactor that acts via the formation of a heterodimer with transcription factors of the GATA family GATA4, GATA5 and GATA6. Such heterodimer can both activate or repress transcriptional activity, depending on the cell and promoter context. Also required in gonadal differentiation, possibly be regulating expression of SRY. Probably acts a corepressor of NR2F2. This is Zinc finger protein ZFPM2 (ZFPM2) from Homo sapiens (Human).